Here is a 274-residue protein sequence, read N- to C-terminus: MKLEKDNAMDRADTLEQQNKEANIRAEKAEEEVHNLQKRMQQLENDLDQVQESLLKANTQLEEKDKALSNAEGEVAALNRRIQLLEEDLERSEERLNTATTKLAEASQAADESERMRKVLENRSLSDEERMDALENQLKEARFLAEEADRKYDEVARKLAMVEADLERAEERAETGESKFVELEEELRVVGNNLKSLEVSEEKANQREEAYKEQIKTLTNKLKAAEARAEFAERSVQKLQKEVDRLEDELVNEKEKYKSITDELDQTFSELSGY.

The tract at residues 1 to 30 is disordered; that stretch reads MKLEKDNAMDRADTLEQQNKEANIRAEKAE. Residues 1–274 are a coiled coil; that stretch reads MKLEKDNAMD…DQTFSELSGY (274 aa).

Belongs to the tropomyosin family. Homodimer.

Its function is as follows. Tropomyosin, in association with the troponin complex, plays a central role in the calcium dependent regulation of muscle contraction. The sequence is that of Tropomyosin from Panulirus stimpsoni (Chinese spiny lobster).